Here is a 169-residue protein sequence, read N- to C-terminus: Aspartic protease inhibitor 6 (169 aa).

N-linked (GlcNAc...) asparagine glycosylation is present at Asn1. 2 disulfides stabilise this stretch: Cys30–Cys75 and Cys124–Cys134.

It belongs to the protease inhibitor I3 (leguminous Kunitz-type inhibitor) family.

The protein localises to the vacuole. Its function is as follows. Inhibitor of cathepsin D (aspartic protease). May also inhibit trypsin and chymotrypsin (serine proteases). Protects the plant by inhibiting proteases of invading organisms. The protein is Aspartic protease inhibitor 6 of Solanum tuberosum (Potato).